A 124-amino-acid chain; its full sequence is Small ribosomal subunit protein uS13 (124 aa).

The interval 95–124 is disordered; the sequence is GLPVRGQRTKTNARTRKGPKRTIAGKKKAK.

This sequence belongs to the universal ribosomal protein uS13 family. Part of the 30S ribosomal subunit. Forms a loose heterodimer with protein S19. Forms two bridges to the 50S subunit in the 70S ribosome.

Functionally, located at the top of the head of the 30S subunit, it contacts several helices of the 16S rRNA. In the 70S ribosome it contacts the 23S rRNA (bridge B1a) and protein L5 of the 50S subunit (bridge B1b), connecting the 2 subunits; these bridges are implicated in subunit movement. Contacts the tRNAs in the A and P-sites. The protein is Small ribosomal subunit protein uS13 of Rhodococcus erythropolis (strain PR4 / NBRC 100887).